Reading from the N-terminus, the 254-residue chain is Low affinity immunoglobulin gamma Fc region receptor III-A (254 aa).

A signal peptide spans 1-16 (MWQLLLPTALLLLVSA). The Extracellular segment spans residues 17 to 208 (GMRAEDLPKA…ISSFFPPGYQ (192 aa)). 2 consecutive Ig-like C2-type domains span residues 24 to 105 (PKAV…LEVH) and 107 to 189 (GWLL…VNIT). 2 disulfide bridges follow: Cys-47–Cys-89 and Cys-128–Cys-172. N-linked (GlcNAc...) asparagine glycans are attached at residues Asn-56, Asn-63, and Asn-82. N-linked (GlcNAc...) asparagine glycosylation is found at Asn-180 and Asn-187. A helical transmembrane segment spans residues 209–229 (VSFCLVMVLLFAVDTGLYFSM). The Cytoplasmic portion of the chain corresponds to 230–254 (KKSIPSSTRDWEDHKFKWSKDPQDK).

Forms a heterooligomeric complex with ITAM-containing signaling subunits, either a homodimer of CD247, a homodimer of FCER1G or a heterodimer of CD247 and FCER1G. Interacts (via transmembrane domain) with signaling subunits; this interaction is a prerequisite for receptor complex expression on the cell surface and intracellular signal transduction. Binds the Fc region of antigen-complexed IgG with a preference for IgG1 and IgG3 isotypes. Interacts with CD2; this interaction is involved in NK cell activation and cytotoxicity. Interacts with S100A4; this interaction inhibits PKC-dependent phosphorylation of FCGR3A. In terms of processing, glycosylated. Glycosylation plays an inhibitory role in the interaction with IgG1 and IgG2. Undergoes rapid ectodomain shedding upon NK cell stimulation. The soluble form is produced by a proteolytic cleavage mediated by ADAM17. Repeated stimulation causes receptor shedding, a mechanism that allows for increased NK cell motility and detachment from opsonized target cells while avoiding activation-induced NK cell apoptosis. As to expression, lymphocytes and monocytes.

It localises to the cell membrane. The protein localises to the secreted. Its function is as follows. Receptor for the invariable Fc fragment of immunoglobulin gamma (IgG). Optimally activated upon binding of clustered antigen-IgG complexes displayed on cell surfaces, triggers lysis of antibody-coated cells, a process known as antibody-dependent cellular cytotoxicity (ADCC). Does not bind free monomeric IgG, thus avoiding inappropriate effector cell activation in the absence of antigenic trigger. Mediates IgG effector functions on natural killer (NK) cells. Binds antigen-IgG complexes generated upon infection and triggers NK cell-dependent cytokine production and degranulation to limit viral load and propagation. Involved in the generation of memory-like adaptive NK cells capable to produce high amounts of IFNG and to efficiently eliminate virus-infected cells via ADCC. Regulates NK cell survival and proliferation, in particular by preventing NK cell progenitor apoptosis. Fc-binding subunit that associates with CD247 and/or FCER1G adapters to form functional signaling complexes. Following the engagement of antigen-IgG complexes, triggers phosphorylation of immunoreceptor tyrosine-based activation motif (ITAM)-containing adapters with subsequent activation of phosphatidylinositol 3-kinase signaling and sustained elevation of intracellular calcium that ultimately drive NK cell activation. The ITAM-dependent signaling coupled to receptor phosphorylation by PKC mediates robust intracellular calcium flux that leads to production of pro-inflammatory cytokines, whereas in the absence of receptor phosphorylation it mainly activates phosphatidylinositol 3-kinase signaling leading to cell degranulation. Costimulates NK cells and trigger lysis of target cells independently of IgG binding. Mediates the antitumor activities of therapeutic antibodies. Upon ligation on monocytes triggers TNFA-dependent ADCC of IgG-coated tumor cells. Mediates enhanced ADCC in response to afucosylated IgGs. The protein is Low affinity immunoglobulin gamma Fc region receptor III-A (FCGR3A) of Macaca fascicularis (Crab-eating macaque).